Consider the following 82-residue polypeptide: Putative antitoxin VapB23 (82 aa).

In terms of biological role, putative antitoxin component of a possible type II toxin-antitoxin (TA) system. The cognate toxin is VapC23. The polypeptide is Putative antitoxin VapB23 (vapB23) (Mycobacterium tuberculosis (strain ATCC 25618 / H37Rv)).